We begin with the raw amino-acid sequence, 343 residues long: Zinc finger CCCH domain-containing protein 1 (343 aa).

Residues 1–102 (MSDSGEPKPS…PERSVFHYDS (102 aa)) are disordered. Residues 7 to 25 (PKPSQQEEPLPQPAAQETQ) are compositionally biased toward low complexity. The segment covering 35-44 (KPTKSKNIRK) has biased composition (basic residues). Residues 79 to 91 (SSGPSKSSTTTSG) are compositionally biased toward low complexity. The C3H1-type zinc-finger motif lies at 200–228 (DYQPDICKDYKETGYCGYGDSCKFLHDRG). Positions 249 to 268 (RNKAMGVEDEDDEADKDSDE) are disordered. Residues 255-268 (VEDEDDEADKDSDE) show a composition bias toward acidic residues. The segment at 277 to 315 (CFICREPFVDPVVTKCKHYFCEHCALKHHTKNKKCFVCN) adopts an RING-type zinc-finger fold.

This is Zinc finger CCCH domain-containing protein 1 from Arabidopsis thaliana (Mouse-ear cress).